A 610-amino-acid chain; its full sequence is Glutamine--fructose-6-phosphate aminotransferase [isomerizing] (610 aa).

Cys-2 acts as the Nucleophile; for GATase activity in catalysis. Residues 2 to 219 (CGIVGAVAQR…EGDVAEITRR (218 aa)) enclose the Glutamine amidotransferase type-2 domain. 2 SIS domains span residues 287-427 (ADEL…LRGM) and 459-600 (LAEG…VDQP). Lys-605 acts as the For Fru-6P isomerization activity in catalysis.

Homodimer.

The protein localises to the cytoplasm. The enzyme catalyses D-fructose 6-phosphate + L-glutamine = D-glucosamine 6-phosphate + L-glutamate. Its function is as follows. Catalyzes the first step in hexosamine metabolism, converting fructose-6P into glucosamine-6P using glutamine as a nitrogen source. This chain is Glutamine--fructose-6-phosphate aminotransferase [isomerizing], found in Pectobacterium atrosepticum (strain SCRI 1043 / ATCC BAA-672) (Erwinia carotovora subsp. atroseptica).